The sequence spans 431 residues: Serine--tRNA ligase (431 aa).

Residues 41–66 form a disordered region; that stretch reads QSRTQELQAERNARSKSIGEAARRGE. Residue 240–242 coordinates L-serine; the sequence is TSE. Residue 271–273 participates in ATP binding; the sequence is RSE. Glutamate 294 serves as a coordination point for L-serine. Residue 358–361 participates in ATP binding; that stretch reads EISS. Serine 392 serves as a coordination point for L-serine.

It belongs to the class-II aminoacyl-tRNA synthetase family. Type-1 seryl-tRNA synthetase subfamily. As to quaternary structure, homodimer. The tRNA molecule binds across the dimer.

It is found in the cytoplasm. The catalysed reaction is tRNA(Ser) + L-serine + ATP = L-seryl-tRNA(Ser) + AMP + diphosphate + H(+). It catalyses the reaction tRNA(Sec) + L-serine + ATP = L-seryl-tRNA(Sec) + AMP + diphosphate + H(+). The protein operates within aminoacyl-tRNA biosynthesis; selenocysteinyl-tRNA(Sec) biosynthesis; L-seryl-tRNA(Sec) from L-serine and tRNA(Sec): step 1/1. In terms of biological role, catalyzes the attachment of serine to tRNA(Ser). Is also able to aminoacylate tRNA(Sec) with serine, to form the misacylated tRNA L-seryl-tRNA(Sec), which will be further converted into selenocysteinyl-tRNA(Sec). This chain is Serine--tRNA ligase, found in Aeromonas salmonicida (strain A449).